A 446-amino-acid polypeptide reads, in one-letter code: Iroquois-class homeodomain protein IRX-6 (446 aa).

Residues Gly146–Asn208 constitute a DNA-binding region (homeobox). 2 disordered regions span residues Asn208 to Glu273 and Ala362 to Val394. The span at Lys217–Gly226 shows a compositional bias: basic and acidic residues. The span at Leu256–Glu273 shows a compositional bias: acidic residues.

It belongs to the TALE/IRO homeobox family.

The protein resides in the nucleus. In terms of biological role, transcription factor. Binds to the iroquois binding site (IBS) motif of target genes to regulate gene expression; functions as a transcriptional activator or repressor. Modulates expression of RCVRN, VSX1, BHLHE22/BHLHB5 and TACR3/Nk3r. Required downstream of retinal bipolar cell specification for the terminal differentiation of type 2, type 3a and possibly type 6 bipolar cells. This is Iroquois-class homeodomain protein IRX-6 (IRX6) from Homo sapiens (Human).